We begin with the raw amino-acid sequence, 475 residues long: Glycogen synthase (475 aa).

Residue Lys15 participates in ADP-alpha-D-glucose binding.

This sequence belongs to the glycosyltransferase 1 family. Bacterial/plant glycogen synthase subfamily.

It catalyses the reaction [(1-&gt;4)-alpha-D-glucosyl](n) + ADP-alpha-D-glucose = [(1-&gt;4)-alpha-D-glucosyl](n+1) + ADP + H(+). The protein operates within glycan biosynthesis; glycogen biosynthesis. In terms of biological role, synthesizes alpha-1,4-glucan chains using ADP-glucose. The protein is Glycogen synthase of Anaeromyxobacter sp. (strain K).